We begin with the raw amino-acid sequence, 99 residues long: Integration host factor subunit alpha (99 aa).

Residues 49 to 71 are disordered; sequence FGNFDLRDKNQRPGRNPKTGEDI.

It belongs to the bacterial histone-like protein family. Heterodimer of an alpha and a beta chain.

Functionally, this protein is one of the two subunits of integration host factor, a specific DNA-binding protein that functions in genetic recombination as well as in transcriptional and translational control. The protein is Integration host factor subunit alpha of Shewanella frigidimarina (strain NCIMB 400).